The sequence spans 367 residues: Outer membrane porin C (367 aa).

Positions Met-1–Ala-21 are cleaved as a signal peptide.

It belongs to the Gram-negative porin family. Homotrimer.

It is found in the cell outer membrane. Its function is as follows. Forms pores that allow passive diffusion of small molecules across the outer membrane. This Escherichia coli O157:H7 protein is Outer membrane porin C (ompC).